Consider the following 172-residue polypeptide: uncharacterized protein (172 aa).

An N-terminal signal peptide occupies residues methionine 1–glycine 21. Residue cysteine 22 is the site of N-palmitoyl cysteine attachment. Residue cysteine 22 is the site of S-diacylglycerol cysteine attachment.

The protein localises to the cell membrane. This is an uncharacterized protein from Escherichia coli O157:H7.